We begin with the raw amino-acid sequence, 321 residues long: ATP-dependent 6-phosphofructokinase (321 aa).

G11 contributes to the ATP binding site. Position 21–25 (21–25 (RAVVR)) interacts with ADP. Residues 72-73 (RC) and 102-105 (GDGS) each bind ATP. D103 contacts Mg(2+). 126-128 (TID) lines the substrate pocket. The Proton acceptor role is filled by D128. Position 155 (R155) interacts with ADP. Substrate contacts are provided by residues R163 and 170–172 (MGR). ADP-binding positions include 186 to 188 (GAE), R212, and 214 to 216 (KLH). Substrate contacts are provided by residues E223, R245, and 251–254 (HIQR).

Belongs to the phosphofructokinase type A (PFKA) family. ATP-dependent PFK group I subfamily. Prokaryotic clade 'B1' sub-subfamily. As to quaternary structure, homotetramer. It depends on Mg(2+) as a cofactor.

The protein localises to the cytoplasm. The catalysed reaction is beta-D-fructose 6-phosphate + ATP = beta-D-fructose 1,6-bisphosphate + ADP + H(+). Its pathway is carbohydrate degradation; glycolysis; D-glyceraldehyde 3-phosphate and glycerone phosphate from D-glucose: step 3/4. Its activity is regulated as follows. Allosterically activated by ADP and other diphosphonucleosides, and allosterically inhibited by phosphoenolpyruvate. Catalyzes the phosphorylation of D-fructose 6-phosphate to fructose 1,6-bisphosphate by ATP, the first committing step of glycolysis. In Caldanaerobacter subterraneus subsp. tengcongensis (strain DSM 15242 / JCM 11007 / NBRC 100824 / MB4) (Thermoanaerobacter tengcongensis), this protein is ATP-dependent 6-phosphofructokinase.